The following is a 466-amino-acid chain: Vacuolar protein sorting-associated protein 30 (466 aa).

Residues 35–55 are disordered; it reads SETNTDNSDNNKHNGENDRNI. The segment covering 43 to 53 has biased composition (basic and acidic residues); it reads DNNKHNGENDR. Residues 149–258 are a coiled coil; it reads DTLLEKLKEE…QMEHLSFIKD (110 aa). The BARA stretch occupies residues 279-463; that stretch reads LNIYNETFRI…LAFSTSRINK (185 aa). The tract at residues 439 to 464 is required for membrane-association, autophagic function during starvation and normal autophagosome morphology; the sequence is WTTACKFLLTNIKWLLAFSTSRINKA.

It belongs to the beclin family. In terms of assembly, component of the autophagy-specific VPS34 PI3-kinase complex I; and of the VPS34 PI3-kinase complex II.

Its subcellular location is the endosome membrane. It localises to the vacuole membrane. The protein resides in the preautophagosomal structure membrane. Required for cytoplasm to vacuole transport (Cvt), autophagy, nucleophagy, and mitophagy, as a part of the autophagy-specific VPS34 PI3-kinase complex I. This complex is essential to recruit the ATG8-phosphatidylinositol conjugate and the ATG12-ATG5 conjugate to the pre-autophagosomal structure. Also involved in endosome-to-Golgi retrograde transport as part of the VPS34 PI3-kinase complex II. The chain is Vacuolar protein sorting-associated protein 30 from Kluyveromyces marxianus (strain DMKU3-1042 / BCC 29191 / NBRC 104275) (Yeast).